A 288-amino-acid polypeptide reads, in one-letter code: MTTERPDAGDSGSEKPDETAAPDPAANGARRSKTRLAARSLGHGFGDGAVLEDISLAVEPGEILAVVGPSGTGKTTLFRLLAMFERPDEGTVEVGGDDVWDLPEARRLAVRRRVGMAFQTRSLFSTTVEENVSYGLRVRRSWSARVRDAVEGLFGRDEPSETVRDALRTVGMFDKVGRDAGSLSAGEAQRVAIARALAPDPDVLLLDEPTSNLDPRNTAAIESAMRAARDRGIAVALATHDMQQARRVSDRTAVILGGTCIESGPTDAVFESPDDDRVRQFVEGKLVY.

The segment covering 1 to 18 (MTTERPDAGDSGSEKPDE) has biased composition (basic and acidic residues). Residues 1-33 (MTTERPDAGDSGSEKPDETAAPDPAANGARRSK) form a disordered region. One can recognise an ABC transporter domain in the interval 36–282 (LAARSLGHGF…PDDDRVRQFV (247 aa)). 68 to 75 (GPSGTGKT) lines the ATP pocket.

It belongs to the ABC transporter superfamily. The complex is composed of two ATP-binding proteins (HVO_1886), two transmembrane proteins (HVO_1887) and a solute-binding protein (HVO_1888).

Its subcellular location is the cell membrane. In terms of biological role, part of an ABC transporter complex involved in anions import. Responsible for energy coupling to the transport system. This is Probable anion import ATP-binding protein HVO_1886 from Haloferax volcanii (strain ATCC 29605 / DSM 3757 / JCM 8879 / NBRC 14742 / NCIMB 2012 / VKM B-1768 / DS2) (Halobacterium volcanii).